A 127-amino-acid chain; its full sequence is Fluoride-specific ion channel FluC (127 aa).

Transmembrane regions (helical) follow at residues 4–24, 35–55, 71–91, and 103–123; these read LLLAVFIGGGTGSVARWLLSM, LGTLAANLIGAFIIGMGFAWF, TGFCGGLTTFSTFSAEVVFLL, and VFVNLLGSFAMTALAFWLFSA. Na(+) contacts are provided by Gly75 and Thr78.

This sequence belongs to the fluoride channel Fluc/FEX (TC 1.A.43) family.

It is found in the cell inner membrane. The enzyme catalyses fluoride(in) = fluoride(out). With respect to regulation, na(+) is not transported, but it plays an essential structural role and its presence is essential for fluoride channel function. Functionally, fluoride-specific ion channel. Important for reducing fluoride concentration in the cell, thus reducing its toxicity. The chain is Fluoride-specific ion channel FluC from Shigella flexneri serotype 5b (strain 8401).